We begin with the raw amino-acid sequence, 93 residues long: Small ribosomal subunit protein uS15 (93 aa).

It belongs to the universal ribosomal protein uS15 family. Part of the 30S ribosomal subunit. Forms a bridge to the 50S subunit in the 70S ribosome, contacting the 23S rRNA.

Functionally, one of the primary rRNA binding proteins, it binds directly to 16S rRNA where it helps nucleate assembly of the platform of the 30S subunit by binding and bridging several RNA helices of the 16S rRNA. In terms of biological role, forms an intersubunit bridge (bridge B4) with the 23S rRNA of the 50S subunit in the ribosome. The polypeptide is Small ribosomal subunit protein uS15 (Ehrlichia ruminantium (strain Gardel)).